The following is a 206-amino-acid chain: Small ribosomal subunit protein uS4 (206 aa).

Residues 96 to 156 enclose the S4 RNA-binding domain; that stretch reads GRLDNVVYRM…EKSKKQSRIK (61 aa).

The protein belongs to the universal ribosomal protein uS4 family. Part of the 30S ribosomal subunit. Contacts protein S5. The interaction surface between S4 and S5 is involved in control of translational fidelity.

In terms of biological role, one of the primary rRNA binding proteins, it binds directly to 16S rRNA where it nucleates assembly of the body of the 30S subunit. Functionally, with S5 and S12 plays an important role in translational accuracy. The sequence is that of Small ribosomal subunit protein uS4 from Photorhabdus laumondii subsp. laumondii (strain DSM 15139 / CIP 105565 / TT01) (Photorhabdus luminescens subsp. laumondii).